We begin with the raw amino-acid sequence, 518 residues long: Envelope protein (518 aa).

Positions 1-31 are cleaved as a signal peptide; the sequence is MSVNRSSIKSLLMVFMIVSSSLLAPVGGAAA. Over 32–485 the chain is Extracellular; it reads DEFRTPAASD…IEDREPEAGG (454 aa). Asn213 carries an N-linked (GlcNAc...) (hybrid) asparagine; by host glycan. A helical transmembrane segment spans residues 486–506; the sequence is FFGSGSTDTMLVGLLALAGVL. Over 507–518 the chain is Cytoplasmic; the sequence is LLAQSNNRGGRR.

In terms of processing, N-glycosylated by a pentasaccharide comprising glucose, glucuronic acid and a terminal 5-N-formyl-legionaminic acid residue.

It is found in the virion membrane. In terms of biological role, envelope protein that may play a role in host-cell attachment and viral genome entry. This chain is Envelope protein, found in Halorubrum sp. PV6 (HRPV-1).